We begin with the raw amino-acid sequence, 216 residues long: Kynurenine formamidase (216 aa).

Substrate is bound at residue Trp25. Zn(2+)-binding residues include His55, His59, and Asp61. His65 functions as the Proton donor/acceptor in the catalytic mechanism. Zn(2+) contacts are provided by His167 and Glu179.

It belongs to the Cyclase 1 superfamily. KynB family. Homodimer. The cofactor is Zn(2+).

The enzyme catalyses N-formyl-L-kynurenine + H2O = L-kynurenine + formate + H(+). It participates in amino-acid degradation; L-tryptophan degradation via kynurenine pathway; L-kynurenine from L-tryptophan: step 2/2. In terms of biological role, catalyzes the hydrolysis of N-formyl-L-kynurenine to L-kynurenine, the second step in the kynurenine pathway of tryptophan degradation. This Cupriavidus necator (strain ATCC 17699 / DSM 428 / KCTC 22496 / NCIMB 10442 / H16 / Stanier 337) (Ralstonia eutropha) protein is Kynurenine formamidase.